Consider the following 360-residue polypeptide: Nucleoporin SEH1 (360 aa).

6 WD repeats span residues 10–49 (DHKD…DWHC), 55–96 (THSG…SNDK), 111–152 (DSRT…NLSQ), 160–210 (SCKL…RKYA), 217–258 (TVTD…KELT), and 276–315 (NHNS…NWKC). A Glycyl lysine isopeptide (Lys-Gly) (interchain with G-Cter in SUMO2) cross-link involves residue Lys-12. Residues Ser-179 and Ser-190 each carry the phosphoserine modification. Positions 324 to 354 (SPVNGSSQQGTSNPSLGSTIPSLQNSLNGSS) are enriched in polar residues. The interval 324–360 (SPVNGSSQQGTSNPSLGSTIPSLQNSLNGSSAGRKHS) is disordered.

It belongs to the WD repeat SEC13 family. Component of the Nup107-160 subcomplex of the nuclear pore complex (NPC). The Nup107-160 subcomplex includes NUP160, NUP133, NUP107, NUP98, NUP85, NUP43, NUP37, SEH1 and SEC13. The SEH1 subunit appears to be only weakly associated with the Nup107-160 subcomplex. Component of the GATOR2 subcomplex, composed of MIOS, SEC13, SEH1L, WDR24 and WDR59. The GATOR2 complex interacts with CASTOR1 and CASTOR2; the interaction is negatively regulated by arginine. The GATOR2 complex interacts with SESN1, SESN2 and SESN3; the interaction is negatively regulated by amino acids. SESN1, SESN2 and SESN3 convey leucine availability via direct interaction with SEH1L and WDR24.

The protein resides in the chromosome. It localises to the centromere. The protein localises to the kinetochore. It is found in the nucleus. Its subcellular location is the nuclear pore complex. The protein resides in the lysosome membrane. With respect to regulation, the GATOR2 complex is negatively regulated by the upstream amino acid sensors CASTOR1 and SESN2, which sequester the GATOR2 complex in absence of amino acids. In the presence of abundant amino acids, GATOR2 is released from CASTOR1 and SESN2 and activated. Functionally, component of the Nup107-160 subcomplex of the nuclear pore complex (NPC). The Nup107-160 subcomplex is required for the assembly of a functional NPC. The Nup107-160 subcomplex is also required for normal kinetochore microtubule attachment, mitotic progression and chromosome segregation. This subunit plays a role in recruitment of the Nup107-160 subcomplex to the kinetochore. As a component of the GATOR2 complex, functions as an activator of the amino acid-sensing branch of the mTORC1 signaling pathway. The GATOR2 complex indirectly activates mTORC1 through the inhibition of the GATOR1 subcomplex. GATOR2 probably acts as an E3 ubiquitin-protein ligase toward GATOR1. In the presence of abundant amino acids, the GATOR2 complex mediates ubiquitination of the NPRL2 core component of the GATOR1 complex, leading to GATOR1 inactivation. In the absence of amino acids, GATOR2 is inhibited, activating the GATOR1 complex. Within the GATOR2 complex, SEC13 and SEH1L are required to stabilize the complex. The chain is Nucleoporin SEH1 (SEH1L) from Homo sapiens (Human).